Reading from the N-terminus, the 78-residue chain is Conotoxin Cl14.9 (78 aa).

A signal peptide spans 1 to 22; it reads MTAKATLLVLALVVMATSGVSS. Positions 23-47 are excised as a propeptide; that stretch reads ASVAGGPVVNSDTVSRSDPERLSTR. Ile70 is modified (isoleucine amide). A propeptide spanning residues 74-78 is cleaved from the precursor; the sequence is DITQQ.

In terms of processing, contains 2 disulfide bonds. Expressed by the venom duct.

The protein resides in the secreted. This is Conotoxin Cl14.9 from Californiconus californicus (California cone).